Here is a 111-residue protein sequence, read N- to C-terminus: Cytochrome c-550 (111 aa).

Heme c is bound by residues C13, C16, H17, and M90.

Binds 1 heme c group covalently per subunit.

This chain is Cytochrome c-550, found in Novispirillum itersonii (Aquaspirillum itersonii).